Here is a 217-residue protein sequence, read N- to C-terminus: ATP phosphoribosyltransferase (217 aa).

The protein belongs to the ATP phosphoribosyltransferase family. Short subfamily. Heteromultimer composed of HisG and HisZ subunits.

Its subcellular location is the cytoplasm. The catalysed reaction is 1-(5-phospho-beta-D-ribosyl)-ATP + diphosphate = 5-phospho-alpha-D-ribose 1-diphosphate + ATP. It participates in amino-acid biosynthesis; L-histidine biosynthesis; L-histidine from 5-phospho-alpha-D-ribose 1-diphosphate: step 1/9. Its function is as follows. Catalyzes the condensation of ATP and 5-phosphoribose 1-diphosphate to form N'-(5'-phosphoribosyl)-ATP (PR-ATP). Has a crucial role in the pathway because the rate of histidine biosynthesis seems to be controlled primarily by regulation of HisG enzymatic activity. The protein is ATP phosphoribosyltransferase (hisG) of Neisseria meningitidis serogroup A / serotype 4A (strain DSM 15465 / Z2491).